A 90-amino-acid polypeptide reads, in one-letter code: Probable Fe(2+)-trafficking protein (90 aa).

The protein belongs to the Fe(2+)-trafficking protein family.

Its function is as follows. Could be a mediator in iron transactions between iron acquisition and iron-requiring processes, such as synthesis and/or repair of Fe-S clusters in biosynthetic enzymes. The chain is Probable Fe(2+)-trafficking protein from Vibrio parahaemolyticus serotype O3:K6 (strain RIMD 2210633).